A 932-amino-acid chain; its full sequence is Potassium voltage-gated channel subfamily KQT member 5 (932 aa).

At 1–125 (MPRHHAGGEE…YNVLERPRGW (125 aa)) the chain is on the cytoplasmic side. Serine 88 carries the post-translational modification Phosphoserine. The chain crosses the membrane as a helical span at residues 126-146 (AFIYHAFVFLLVFGCLILSVF). Residues 147-156 (STIPEHTKLA) are Extracellular-facing. A helical membrane pass occupies residues 157-177 (SSCLLILEFVMIVVFGLEFII). Residues 178–200 (RIWSAGCCCRYRGWQGRLRFARK) lie on the Cytoplasmic side of the membrane. A helical membrane pass occupies residues 201-221 (PFCVIDTIVLIASIAVVSAKT). Residues 222–229 (QGNIFATS) lie on the Extracellular side of the membrane. Residues 230–252 (ALRSLRFLQILRMVRMDRRGGTW) traverse the membrane as a helical; Voltage-sensor segment. A 1,2-diacyl-sn-glycero-3-phospho-(1D-myo-inositol-4,5-bisphosphate) is bound by residues arginine 248 and lysine 264. Residues 253–266 (KLLGSVVYAHSKEL) lie on the Cytoplasmic side of the membrane. The chain crosses the membrane as a helical span at residues 267-287 (ITAWYIGFLVLIFSSFLVYLV). Over 288–298 (EKDANKEFSTY) the chain is Extracellular. An intramembrane region (pore-forming) is located at residues 299–319 (ADALWWGTITLTTIGYGDKTP). Topologically, residues 320–325 (LTWLGR) are extracellular. Residues 326 to 346 (LLSAGFALLGISFFALPAGIL) traverse the membrane as a helical segment. Residues 347 to 932 (GSGFALKVQE…ALSLPHVKLK (586 aa)) lie on the Cytoplasmic side of the membrane. Lysine 361 serves as a coordination point for a 1,2-diacyl-sn-glycero-3-phospho-(1D-myo-inositol-4,5-bisphosphate). The interaction with CALM stretch occupies residues 370–378 (AANLIQCVW). The interval 404 to 465 (SPTKKEQGEA…GSPTKVQKSW (62 aa)) is disordered. The segment covering 431-440 (RGQSIKSRQA) has biased composition (polar residues). Serine 447 is modified (phosphoserine). The interaction with CALM stretch occupies residues 521–528 (VIRAIRIM). The interval 655 to 678 (SDYQSPVDSKDLSGSAQNSGCLSR) is disordered. Residue serine 831 is modified to Phosphoserine. Acidic residues predominate over residues 876–885 (VGPEETETDT). Residues 876–919 (VGPEETETDTFDAAPQPAREAAFASDSLRTGRSRSSQSICKAGE) are disordered. Low complexity predominate over residues 888–899 (AAPQPAREAAFA). Over residues 902 to 914 (SLRTGRSRSSQSI) the composition is skewed to polar residues.

Belongs to the potassium channel family. KQT (TC 1.A.1.15) subfamily. Kv7.5/KCNQ5 sub-subfamily. As to quaternary structure, homotetramer; forms a functional homotetrameric channel resulting in the expression of a small M-current. Heterotetramer with KCNQ3; forms heterotetrameric M-channel responsible for the native M-current. Heterotetramer with KCNQ1; forms a functional voltage-gated potassium channel. Interacts (via C-terminus) with calmodulin/CALM1; forms a heterooctameric structure (with 4:4 KCNQ1:CALM stoichiometry); the interaction is calcium-independent, constitutive and participates in the channel function. Strongly expressed in brain and skeletal muscle. In brain, expressed in cerebral cortex, occipital pole, frontal lobe and temporal lobe. Lower levels in hippocampus and putamen. Low to undetectable levels in medulla, cerebellum and thalamus.

The protein localises to the cell membrane. The enzyme catalyses K(+)(in) = K(+)(out). Phosphatidylinositol-4,5-bisphosphate (PIP2) is essential to activate KCNQ5 channel by inducing the coupling of the voltage-sensing domain (VSD) and the pore-forming domain (PD). Calcium suppresses KCNQ5 channel current through calcium-bound CALM C-terminus. Therefore CALM acts as calcium sensor that controls channel activity. Activated by niflumic acid and the anticonvulsant retigabine. Inhibited by barium, linopirdine, XE991 and tetraethylammonium (as homomer). Insensitive to tetraethylammonium in KCNQ3-KCNQ5 heteromers. Functionally, pore-forming subunit of the voltage-gated potassium (Kv) channel broadly expressed in brain and involved in the regulation of neuronal excitability. Associates with KCNQ3/Kv7.3 pore-forming subunit to form a potassium channel which contributes to M-type current, a slowly activating and deactivating potassium conductance which plays a critical role in determining the subthreshold electrical excitability of neurons. Contributes, with other potassium channels, to the molecular diversity of a heterogeneous population of M-channels, varying in kinetic and pharmacological properties, which underlie this physiologically important current. Also forms a functional channel with KCNQ1/Kv7.1 subunit that may contribute to vasoconstriction and hypertension. Channel may be selectively permeable in vitro to other cations besides potassium, in decreasing order of affinity K(+) = Rb(+) &gt; Cs(+) &gt; Na(+). Similar to the native M-channel, KCNQ3-KCNQ5 potassium channel is suppressed by activation of the muscarinic acetylcholine receptor CHRM1. The sequence is that of Potassium voltage-gated channel subfamily KQT member 5 from Homo sapiens (Human).